The chain runs to 408 residues: Histidine--tRNA ligase (408 aa).

This sequence belongs to the class-II aminoacyl-tRNA synthetase family. As to quaternary structure, homodimer.

The protein resides in the cytoplasm. It carries out the reaction tRNA(His) + L-histidine + ATP = L-histidyl-tRNA(His) + AMP + diphosphate + H(+). In Wolbachia pipientis wMel, this protein is Histidine--tRNA ligase.